Reading from the N-terminus, the 244-residue chain is Phosphoadenosine 5'-phosphosulfate reductase (244 aa).

The active-site Nucleophile; cysteine thiosulfonate intermediate is Cys-239.

This sequence belongs to the PAPS reductase family. CysH subfamily.

It is found in the cytoplasm. The enzyme catalyses [thioredoxin]-disulfide + sulfite + adenosine 3',5'-bisphosphate + 2 H(+) = [thioredoxin]-dithiol + 3'-phosphoadenylyl sulfate. It participates in sulfur metabolism; hydrogen sulfide biosynthesis; sulfite from sulfate: step 3/3. Functionally, catalyzes the formation of sulfite from phosphoadenosine 5'-phosphosulfate (PAPS) using thioredoxin as an electron donor. The chain is Phosphoadenosine 5'-phosphosulfate reductase from Zymomonas mobilis subsp. mobilis (strain ATCC 31821 / ZM4 / CP4).